The chain runs to 870 residues: MAKKRIYEVAKEVGVDNKVVVQKAKELGFDVKNHMSSIDDAQVAKLKGSFQNSAPAEKNNKIKISVSSIRKNEKKQEDNAGSKKPRRRNNKRLQNNDRNHKNRNDRDHSANSGSGKPKAAALLQQFKQKQRAEEGQLNRQAQKAKKEYHEQLKYPKKEQPVNNKKKTNKESNNKKSEEVEKKVIGPKILKPSPARLKKNQPSTNEKPAVKVSIPEPPKEEKRNNGRGKNMGKPGHKGKNQFFNNHSEQSDRSERKRRKNKNKKRKQEQKPKKQITKRKERPLPETLVYEKGMNAQDIGKLIHREPAEIVKKLFMLGVMTNQNRSLDKDTIELLAAEYGINAKQKVHEDISDIDTLYNKRMEASKKSKNQVKRPPVVTIMGHVDHGKTTLLDRLRHTHVSAHEAGGITQKIGAYQVRLDDRLITFLDTPGHAAFSNMRARGAEITDIVVLVVAADDGVMPQTVEAIDHAKSANVPIIVAINKMDKPGANPQHVTEELMKYNLIPEDYGGDTIFVNISARTGQNVDDLLQMILLQADMMELKANPTEMAIGTVIEARLSRGRGPVADVLIQQGTLNIGDPIVVGDTFGRVRTMTNDRGRQVKKATPSEPVEITGLNDVPESADKLVEFKDEKTARSVGEARAQQALQKSRENVQHVTLDNLFDTMKKENMKEVDIVLKADVQGSVEALQQSLEKIEVEGVRVNIIHSGVGAINESDVTLAGASNAFIIGFNVRPTATAKSQAETEGVDIRLYSIIYKAIDDVTAAMKGMLEPTYEEKVIGNLTVRETWKVSKVGTIAGSFVDKGLVKSDAKIRIIRDGIVKYDGEIASLKRFKDDVKEVKQGNDCGLTIKDYNDIKVGDEFEVYEMQQVEPK.

The interval 49 to 284 (SFQNSAPAEK…TKRKERPLPE (236 aa)) is disordered. Composition is skewed to basic and acidic residues over residues 70-81 (RKNEKKQEDNAG) and 94-109 (QNND…RDHS). Residues 116–127 (KPKAAALLQQFK) show a composition bias toward low complexity. Basic and acidic residues-rich tracts occupy residues 144–159 (AKKE…KKEQ) and 168–183 (NKES…EKKV). Residues 254 to 279 (RKRRKNKNKKRKQEQKPKKQITKRKE) are compositionally biased toward basic residues. The region spanning 371–540 (KRPPVVTIMG…LLQADMMELK (170 aa)) is the tr-type G domain. Residues 380–387 (GHVDHGKT) form a G1 region. GTP is bound at residue 380–387 (GHVDHGKT). The tract at residues 405-409 (GITQK) is G2. The interval 426-429 (DTPG) is G3. GTP is bound by residues 426-430 (DTPGH) and 480-483 (NKMD). The segment at 480–483 (NKMD) is G4. Residues 516-518 (SAR) form a G5 region.

It belongs to the TRAFAC class translation factor GTPase superfamily. Classic translation factor GTPase family. IF-2 subfamily.

The protein resides in the cytoplasm. One of the essential components for the initiation of protein synthesis. Protects formylmethionyl-tRNA from spontaneous hydrolysis and promotes its binding to the 30S ribosomal subunits. Also involved in the hydrolysis of GTP during the formation of the 70S ribosomal complex. This is Translation initiation factor IF-2 from Lactobacillus helveticus (strain DPC 4571).